Consider the following 508-residue polypeptide: Photosystem II CP47 reaction center protein (508 aa).

The next 6 membrane-spanning stretches (helical) occupy residues 21-36, 101-115, 140-156, 203-218, 237-252, and 457-472; these read SVHIMHTALVAGWAGS, IVFSGLCFLAAIWHW, GIHLFLSGLACFGFGAF, IAAGTLGILAGLFHLS, VLSSSIAAVFFAAFVV, and SFALLFFFGHIWHGAR.

Belongs to the PsbB/PsbC family. PsbB subfamily. In terms of assembly, PSII is composed of 1 copy each of membrane proteins PsbA, PsbB, PsbC, PsbD, PsbE, PsbF, PsbH, PsbI, PsbJ, PsbK, PsbL, PsbM, PsbT, PsbX, PsbY, PsbZ, Psb30/Ycf12, at least 3 peripheral proteins of the oxygen-evolving complex and a large number of cofactors. It forms dimeric complexes. Binds multiple chlorophylls. PSII binds additional chlorophylls, carotenoids and specific lipids. is required as a cofactor.

It localises to the plastid. Its subcellular location is the chloroplast thylakoid membrane. Its function is as follows. One of the components of the core complex of photosystem II (PSII). It binds chlorophyll and helps catalyze the primary light-induced photochemical processes of PSII. PSII is a light-driven water:plastoquinone oxidoreductase, using light energy to abstract electrons from H(2)O, generating O(2) and a proton gradient subsequently used for ATP formation. The protein is Photosystem II CP47 reaction center protein of Ipomoea purpurea (Common morning glory).